The chain runs to 290 residues: 4-hydroxybenzoate octaprenyltransferase (290 aa).

Helical transmembrane passes span 23–43 (IGALLLLWPTLWALWVATPGV), 46–66 (LWILAVFVAGVWLMRAAGCVV), 99–119 (LFVVLVLISFLLVLTLNTMTI), 141–161 (LPQVVLGAAFGWSIPMAFAAV), 163–183 (ESVPLSCWLMFLANILWAVAY), 213–233 (LIIGILQIGVLALMAIIGELN), 234–254 (GLGWGYYWSILVAGALFVYQQ), and 268–288 (AFMNNNYVGLVLFLGLAMSYW).

It belongs to the UbiA prenyltransferase family. It depends on Mg(2+) as a cofactor.

The protein localises to the cell inner membrane. It catalyses the reaction all-trans-octaprenyl diphosphate + 4-hydroxybenzoate = 4-hydroxy-3-(all-trans-octaprenyl)benzoate + diphosphate. Its pathway is cofactor biosynthesis; ubiquinone biosynthesis. Its function is as follows. Catalyzes the prenylation of para-hydroxybenzoate (PHB) with an all-trans polyprenyl group. Mediates the second step in the final reaction sequence of ubiquinone-8 (UQ-8) biosynthesis, which is the condensation of the polyisoprenoid side chain with PHB, generating the first membrane-bound Q intermediate 3-octaprenyl-4-hydroxybenzoate. This is 4-hydroxybenzoate octaprenyltransferase from Escherichia coli O6:K15:H31 (strain 536 / UPEC).